We begin with the raw amino-acid sequence, 153 residues long: Large ribosomal subunit protein uL13 (153 aa).

The interval 134-153 is disordered; that stretch reads EAQQPQALDVGSLNRKNVSA.

It belongs to the universal ribosomal protein uL13 family. In terms of assembly, part of the 50S ribosomal subunit.

In terms of biological role, this protein is one of the early assembly proteins of the 50S ribosomal subunit, although it is not seen to bind rRNA by itself. It is important during the early stages of 50S assembly. This Methylorubrum extorquens (strain CM4 / NCIMB 13688) (Methylobacterium extorquens) protein is Large ribosomal subunit protein uL13.